A 922-amino-acid chain; its full sequence is Band 3 anion transport protein (922 aa).

Disordered stretches follow at residues 1-36 (MEGP…TMSN) and 355-389 (QHPD…LRTR). Topologically, residues 1 to 416 (MEGPGQDTED…LSDIRDALNP (416 aa)) are cytoplasmic. Positions 10-26 (DALRRSLDPEGYEDTKG) are enriched in basic and acidic residues. A compositionally biased stretch (polar residues) spans 27 to 36 (SRTSLGTMSN). The chain crosses the membrane as a helical span at residues 417–440 (QCLAAVIFIYFAALSPAITFGGLL). At 441–448 (GEKTRGMM) the chain is on the extracellular side. A helical membrane pass occupies residues 449–469 (GVSELLLSTSVQCLLFSLLSA). The Cytoplasmic portion of the chain corresponds to 470 to 472 (QPL). Residues 473–489 (LVVGFSGPLLVFEEAFF) form a discontinuously helical membrane-spanning segment. Residues 490 to 498 (RFCEDHGLE) are Extracellular-facing. Residues 499 to 519 (YIVGRVWIGFWLILLVLLVVA) form a helical membrane-spanning segment. Over 520-531 (CEGTVLVRYLSR) the chain is Cytoplasmic. The helical transmembrane segment at 532–554 (YTQEIFSFLISLIFIYETFAKLV) threads the bilayer. Over 555–581 (TIFEAHPLQQSYDTDVSTEPSVPKPNT) the chain is Extracellular. Residues 582–602 (ALLSLVLMAGTFFLALFLRQF) traverse the membrane as a helical segment. Residues 603-613 (KNSVFLPGKVR) lie on the Cytoplasmic side of the membrane. The helical transmembrane segment at 614–634 (RLIGDFGVPISIFVMALADFF) threads the bilayer. At 635-674 (IKDTYTQKLKVPRGLEVTNGTARGWFIHPMGSATPFPIWM) the chain is on the extracellular side. The N-linked (GlcNAc...) asparagine glycan is linked to Asn653. The helical transmembrane segment at 675-695 (MFASPVPALLVFILIFLETQI) threads the bilayer. The Cytoplasmic portion of the chain corresponds to 696-711 (TTLIVSKPERKLVKGS). Residues 712-730 (GFHLDLLLIVAMGGLAALF) traverse the membrane as a helical segment. Residues 731–748 (GMPWLSATTVRTITHANA) form a discontinuously helical membrane-spanning segment. Residues 749 to 771 (LTVVGKSAVPGERAHIVEVKEQR) are Cytoplasmic-facing. 2 helical membrane passes run 772-792 (LSGL…PILK) and 793-811 (YIPL…VTSL). Over 812-849 (FGIQLFDRILLLLMPPKYHPKEPYVTRVKTWRITSSPL) the chain is Cytoplasmic. The segment at residues 850–880 (TQILVVALLWGVKVSPASLRCPFVLVLTVPL) is an intramembrane region (discontinuously helical). The Cytoplasmic segment spans residues 881 to 922 (RRLLLPRIFSEIELKCLDTDDAVVTFEEAEGQDVYNEVQMPS).

It belongs to the anion exchanger (TC 2.A.31) family. In terms of assembly, a dimer in solution, it spans the membrane asymmetrically and appears to be tetrameric. In terms of tissue distribution, erythrocytes.

The protein localises to the cell membrane. It localises to the basolateral cell membrane. The catalysed reaction is hydrogencarbonate(in) + chloride(out) = hydrogencarbonate(out) + chloride(in). In terms of biological role, functions both as a transporter that mediates electroneutral anion exchange across the cell membrane and as a structural protein. Major integral membrane glycoprotein of the erythrocyte membrane; required for normal flexibility and stability of the erythrocyte membrane and for normal erythrocyte shape via the interactions of its cytoplasmic domain with cytoskeletal proteins, glycolytic enzymes, and hemoglobin. Functions as a transporter that mediates the 1:1 exchange of inorganic anions across the erythrocyte membrane. Mediates chloride-bicarbonate exchange in the kidney, and is required for normal acidification of the urine. This is Band 3 anion transport protein (SLC4A1) from Gallus gallus (Chicken).